The following is a 104-amino-acid chain: Protamine-2 (104 aa).

A disordered region spans residues M1–R91. A phosphoserine mark is found at S8, S10, and S33. Over residues S33 to E44 the composition is skewed to basic and acidic residues. A compositionally biased stretch (basic residues) spans R45–R91.

The protein belongs to the protamine P2 family. As to quaternary structure, interacts with TDRP. Post-translationally, proteolytic processing into mature chains is required for histone eviction during spermatogenesis. Transition proteins (TNP1 and TNP2) are required for processing. In terms of tissue distribution, testis.

Its subcellular location is the nucleus. The protein resides in the chromosome. Protamines substitute for histones in the chromatin of sperm during the haploid phase of spermatogenesis. They compact sperm DNA into a highly condensed, stable and inactive complex. This Rattus norvegicus (Rat) protein is Protamine-2 (Prm2).